Reading from the N-terminus, the 212-residue chain is Glycerol-3-phosphate acyltransferase (212 aa).

5 helical membrane passes run 3–23, 51–71, 78–98, 115–135, and 139–159; these read ILLA…VIVS, KAAI…VWLA, DVAI…PVFF, AVHP…AFFF, and SLAA…LFGT.

This sequence belongs to the PlsY family. In terms of assembly, probably interacts with PlsX.

It localises to the cell inner membrane. The enzyme catalyses an acyl phosphate + sn-glycerol 3-phosphate = a 1-acyl-sn-glycero-3-phosphate + phosphate. The protein operates within lipid metabolism; phospholipid metabolism. Its function is as follows. Catalyzes the transfer of an acyl group from acyl-phosphate (acyl-PO(4)) to glycerol-3-phosphate (G3P) to form lysophosphatidic acid (LPA). This enzyme utilizes acyl-phosphate as fatty acyl donor, but not acyl-CoA or acyl-ACP. This is Glycerol-3-phosphate acyltransferase from Burkholderia multivorans (strain ATCC 17616 / 249).